The primary structure comprises 175 residues: ATP-dependent protease subunit HslV (175 aa).

Thr-5 is an active-site residue. The Na(+) site is built by Gly-160, Asp-163, and Thr-166.

It belongs to the peptidase T1B family. HslV subfamily. As to quaternary structure, a double ring-shaped homohexamer of HslV is capped on each side by a ring-shaped HslU homohexamer. The assembly of the HslU/HslV complex is dependent on binding of ATP.

Its subcellular location is the cytoplasm. The catalysed reaction is ATP-dependent cleavage of peptide bonds with broad specificity.. Allosterically activated by HslU binding. Protease subunit of a proteasome-like degradation complex believed to be a general protein degrading machinery. This Myxococcus xanthus protein is ATP-dependent protease subunit HslV.